Here is a 291-residue protein sequence, read N- to C-terminus: 4-diphosphocytidyl-2-C-methyl-D-erythritol kinase (291 aa).

The active site involves K8. 89 to 99 (PIGAGVGGGSS) contacts ATP. D131 is a catalytic residue.

The protein belongs to the GHMP kinase family. IspE subfamily.

It catalyses the reaction 4-CDP-2-C-methyl-D-erythritol + ATP = 4-CDP-2-C-methyl-D-erythritol 2-phosphate + ADP + H(+). It participates in isoprenoid biosynthesis; isopentenyl diphosphate biosynthesis via DXP pathway; isopentenyl diphosphate from 1-deoxy-D-xylulose 5-phosphate: step 3/6. Its function is as follows. Catalyzes the phosphorylation of the position 2 hydroxy group of 4-diphosphocytidyl-2C-methyl-D-erythritol. This is 4-diphosphocytidyl-2-C-methyl-D-erythritol kinase from Chlamydia caviae (strain ATCC VR-813 / DSM 19441 / 03DC25 / GPIC) (Chlamydophila caviae).